A 340-amino-acid polypeptide reads, in one-letter code: Sulfotransferase ppzF (340 aa).

The protein operates within secondary metabolite biosynthesis. Sulfotransferase; part of the gene cluster that mediates the biosynthesis of pyrrolopyrazines, secondary metabolites showing insecticidal activity. The role of ppzF within the pathway has still to be determined. The single multifunctional NRPS ppzA is sufficient to produce peramine via condensation of 1-pyrroline-5-carboxylate and arginine, N-methylation of the alpha-amino group of arginine and reduction of the thioester and the cyclization to form an iminium ion resulting in release from the peptide synthetase. Deprotonation of this intermediate and oxidation of the pyrroline ring would give rise to peramine. In Epichloe species that produce only peramine, the peramine synthetase gene is not localized in a gene cluster, in contrast to Metarhizium species that contain additional pyrrolopyrazine biosynthesis genes. The 2-oxoglutarate-Fe(II) type oxidoreductase ppzC hydroxylates peramine to yield the newly identified compound 8-hydroxyperamine whereas ppzD converts L-proline into trans-4-hydroxy-L-proline, a precursor of peramine biosynthesis. In Metarhizium rileyi (strain RCEF 4871) (Nomuraea rileyi), this protein is Sulfotransferase ppzF.